A 186-amino-acid chain; its full sequence is Elongation factor P (186 aa).

The protein belongs to the elongation factor P family.

It localises to the cytoplasm. The protein operates within protein biosynthesis; polypeptide chain elongation. Involved in peptide bond synthesis. Stimulates efficient translation and peptide-bond synthesis on native or reconstituted 70S ribosomes in vitro. Probably functions indirectly by altering the affinity of the ribosome for aminoacyl-tRNA, thus increasing their reactivity as acceptors for peptidyl transferase. This is Elongation factor P from Prochlorococcus marinus subsp. pastoris (strain CCMP1986 / NIES-2087 / MED4).